Reading from the N-terminus, the 417-residue chain is Putative nickel insertion protein (417 aa).

The disordered stretch occupies residues 69–99; it reads HEHHHDHGHHHHGHGHHHDHTHDHHHHHEHR. The segment covering 74–99 has biased composition (basic residues); the sequence is DHGHHHHGHGHHHDHTHDHHHHHEHR.

It belongs to the LarC family.

In Maridesulfovibrio salexigens (strain ATCC 14822 / DSM 2638 / NCIMB 8403 / VKM B-1763) (Desulfovibrio salexigens), this protein is Putative nickel insertion protein.